The sequence spans 115 residues: MKSVLLFGVLLVTLFSYSSAEMLDDFDQADEDELLSLIEKEEARAKECTPRFYDCSHDRHSCCRSELFKDVCTCFYPEGGDNEVCTCQQPKHLKYMEKAAGKAKKFGGKIKKWFG.

The first 20 residues, 1–20 (MKSVLLFGVLLVTLFSYSSA), serve as a signal peptide directing secretion. Residues 21–44 (EMLDDFDQADEDELLSLIEKEEAR) constitute a propeptide that is removed on maturation. 4 disulfides stabilise this stretch: C48/C63, C55/C72, C62/C87, and C74/C85.

This sequence belongs to the neurotoxin 19 (CSTX) family. 01 subfamily. As to expression, expressed by the venom gland.

The protein resides in the secreted. This is U3-lycotoxin-Ls1k from Lycosa singoriensis (Wolf spider).